The primary structure comprises 27 residues: Pyruvate dehydrogenase protein X component, mitochondrial (27 aa).

The disordered stretch occupies residues 1 to 27 (FRLSPAARNILEKHSLDASQGTATGPR). The Peripheral subunit-binding (PSBD) domain occupies 2–27 (RLSPAARNILEKHSLDASQGTATGPR). Lysine 13 bears the N6-acetyllysine mark. Serine 15 carries the post-translational modification Phosphoserine. Positions 17-27 (DASQGTATGPR) are enriched in polar residues.

The protein belongs to the 2-oxoacid dehydrogenase family. In terms of assembly, part of the inner core of the multimeric pyruvate dehydrogenase complex that is composed of about 48 DLAT and 12 PDHX molecules. This core binds multiple copies of pyruvate dehydrogenase (subunits PDH1A and PDHB, E1), dihydrolipoamide acetyltransferase (DLAT, E2) and lipoamide dehydrogenase (DLD, E3). Interacts with SIRT4. Interacts with DLD.

It is found in the mitochondrion matrix. In terms of biological role, required for anchoring dihydrolipoamide dehydrogenase (E3) to the dihydrolipoamide transacetylase (E2) core of the pyruvate dehydrogenase complexes of eukaryotes. This specific binding is essential for a functional PDH complex. In Mesocricetus auratus (Golden hamster), this protein is Pyruvate dehydrogenase protein X component, mitochondrial.